The primary structure comprises 227 residues: Cytochrome c oxidase subunit 2 (227 aa).

Residues methionine 1–serine 14 lie on the Mitochondrial intermembrane side of the membrane. The chain crosses the membrane as a helical span at residues proline 15–methionine 45. Over leucine 46–glutamine 59 the chain is Mitochondrial matrix. The helical transmembrane segment at glutamate 60–methionine 87 threads the bilayer. The Mitochondrial intermembrane segment spans residues aspartate 88–leucine 227. The Cu cation site is built by histidine 161, cysteine 196, glutamate 198, cysteine 200, histidine 204, and methionine 207. Glutamate 198 lines the Mg(2+) pocket.

This sequence belongs to the cytochrome c oxidase subunit 2 family. Component of the cytochrome c oxidase (complex IV, CIV), a multisubunit enzyme composed of 14 subunits. The complex is composed of a catalytic core of 3 subunits MT-CO1, MT-CO2 and MT-CO3, encoded in the mitochondrial DNA, and 11 supernumerary subunits COX4I, COX5A, COX5B, COX6A, COX6B, COX6C, COX7A, COX7B, COX7C, COX8 and NDUFA4, which are encoded in the nuclear genome. The complex exists as a monomer or a dimer and forms supercomplexes (SCs) in the inner mitochondrial membrane with NADH-ubiquinone oxidoreductase (complex I, CI) and ubiquinol-cytochrome c oxidoreductase (cytochrome b-c1 complex, complex III, CIII), resulting in different assemblies (supercomplex SCI(1)III(2)IV(1) and megacomplex MCI(2)III(2)IV(2)). Found in a complex with TMEM177, COA6, COX18, COX20, SCO1 and SCO2. Interacts with TMEM177 in a COX20-dependent manner. Interacts with COX20. Interacts with COX16. Cu cation is required as a cofactor.

Its subcellular location is the mitochondrion inner membrane. It carries out the reaction 4 Fe(II)-[cytochrome c] + O2 + 8 H(+)(in) = 4 Fe(III)-[cytochrome c] + 2 H2O + 4 H(+)(out). Component of the cytochrome c oxidase, the last enzyme in the mitochondrial electron transport chain which drives oxidative phosphorylation. The respiratory chain contains 3 multisubunit complexes succinate dehydrogenase (complex II, CII), ubiquinol-cytochrome c oxidoreductase (cytochrome b-c1 complex, complex III, CIII) and cytochrome c oxidase (complex IV, CIV), that cooperate to transfer electrons derived from NADH and succinate to molecular oxygen, creating an electrochemical gradient over the inner membrane that drives transmembrane transport and the ATP synthase. Cytochrome c oxidase is the component of the respiratory chain that catalyzes the reduction of oxygen to water. Electrons originating from reduced cytochrome c in the intermembrane space (IMS) are transferred via the dinuclear copper A center (CU(A)) of subunit 2 and heme A of subunit 1 to the active site in subunit 1, a binuclear center (BNC) formed by heme A3 and copper B (CU(B)). The BNC reduces molecular oxygen to 2 water molecules using 4 electrons from cytochrome c in the IMS and 4 protons from the mitochondrial matrix. The protein is Cytochrome c oxidase subunit 2 (MT-CO2) of Microcebus tavaratra (Northern rufous mouse lemur).